The chain runs to 355 residues: Protein AMBP (355 aa).

3-hydroxy-L-kynurenine contacts are provided by C55 and K138. A disulfide bridge links C92 with C189. The N-linked (GlcNAc...) asparagine glycan is linked to N145. K150 contributes to the 3-hydroxy-L-kynurenine binding site. N231 and N255 each carry an N-linked (GlcNAc...) asparagine glycan. Cystine bridges form between C236-C286, C245-C269, C261-C282, C292-C342, C301-C325, and C317-C338. BPTI/Kunitz inhibitor domains are found at residues 236 to 286 and 292 to 342; these read CKAA…LQRC and CRLP…QEYC.

It in the N-terminal section; belongs to the calycin superfamily. Lipocalin family. As to quaternary structure, I-alpha-I plasma protease inhibitors are assembled from one or two heavy chains (H1, H2 or H3) and one light chain, bikunin. Inter-alpha-inhibitor (I-alpha-I) is composed of H1, H2 and bikunin, inter-alpha-like inhibitor (I-alpha-LI) of H2 and bikunin, and pre-alpha-inhibitor (P-alpha-I) of H3 and bikunin. Post-translationally, the precursor is proteolytically processed into two separately functioning proteins. In terms of processing, 3-hydroxykynurenine, an oxidized tryptophan metabolite that is common in biological fluids, reacts with Cys-55, Lys-138, and Lys-150 to form heterogeneous polycyclic chromophores including hydroxanthommatin. The reaction by alpha-1-microglobulin is autocatalytic. The chromophore can react with accessible cysteines forming non-reducible thioether cross-links with other molecules of alpha-1-microglobulin or with other proteins. As to expression, expressed by the liver and secreted in plasma.

The protein localises to the secreted. The sequence is that of Protein AMBP from Pleuronectes platessa (European plaice).